The chain runs to 194 residues: Protein GrpE (194 aa).

Residues 1–12 show a composition bias toward basic and acidic residues; sequence MNKQKNNRERTP. Residues 1-44 form a disordered region; that stretch reads MNKQKNNRERTPQPEQDTERDEQLTNSHENDIDSAPAAEENDKV.

The protein belongs to the GrpE family. As to quaternary structure, homodimer.

It localises to the cytoplasm. Functionally, participates actively in the response to hyperosmotic and heat shock by preventing the aggregation of stress-denatured proteins, in association with DnaK and GrpE. It is the nucleotide exchange factor for DnaK and may function as a thermosensor. Unfolded proteins bind initially to DnaJ; upon interaction with the DnaJ-bound protein, DnaK hydrolyzes its bound ATP, resulting in the formation of a stable complex. GrpE releases ADP from DnaK; ATP binding to DnaK triggers the release of the substrate protein, thus completing the reaction cycle. Several rounds of ATP-dependent interactions between DnaJ, DnaK and GrpE are required for fully efficient folding. The sequence is that of Protein GrpE from Porphyromonas gingivalis (strain ATCC BAA-308 / W83).